The chain runs to 211 residues: tRNA (guanine-N(7)-)-methyltransferase (211 aa).

Residues glutamate 37, aspartate 62, glutamate 89, and aspartate 112 each coordinate S-adenosyl-L-methionine. Aspartate 112 is a catalytic residue. Residues lysine 116 and aspartate 148 each contribute to the substrate site.

Belongs to the class I-like SAM-binding methyltransferase superfamily. TrmB family.

It catalyses the reaction guanosine(46) in tRNA + S-adenosyl-L-methionine = N(7)-methylguanosine(46) in tRNA + S-adenosyl-L-homocysteine. It functions in the pathway tRNA modification; N(7)-methylguanine-tRNA biosynthesis. Its function is as follows. Catalyzes the formation of N(7)-methylguanine at position 46 (m7G46) in tRNA. This is tRNA (guanine-N(7)-)-methyltransferase from Geobacter metallireducens (strain ATCC 53774 / DSM 7210 / GS-15).